Here is a 502-residue protein sequence, read N- to C-terminus: Cytochrome P450 81D1 (502 aa).

Residues 6-26 (IRVVLYSIFSLIFLIISFKFL) traverse the membrane as a helical segment. Cysteine 440 serves as a coordination point for heme.

Belongs to the cytochrome P450 family. Heme serves as cofactor.

Its subcellular location is the membrane. The protein is Cytochrome P450 81D1 (CYP81D1) of Arabidopsis thaliana (Mouse-ear cress).